We begin with the raw amino-acid sequence, 254 residues long: MYTVITVPAFTDNYIWLIRHENHCLVVDPGDAGPVLDRLAALDLQLDAILLTHHHQDHVGGVTALLKHFPHARLYGPKHDPMPDHHGQWLDDGDQINWHGLSLDVIHVPGHTHGHIAYHGHGMLFCGDTLFSGGCGRLFEGTPAQMHDSLQRLAALPDDTLIYCAHEYTLSNLRFAYAVEPDNKAIQQRIGMISKLRQQGLPSLPSRLGDERDFNVFLRCEQDSVKFSAEKYALKCLENPEDTFAVLRSWKDVF.

Residues His53, His55, Asp57, His58, His111, Asp128, and His166 each coordinate Zn(2+).

This sequence belongs to the metallo-beta-lactamase superfamily. Glyoxalase II family. As to quaternary structure, monomer. Zn(2+) serves as cofactor.

It catalyses the reaction an S-(2-hydroxyacyl)glutathione + H2O = a 2-hydroxy carboxylate + glutathione + H(+). Its pathway is secondary metabolite metabolism; methylglyoxal degradation; (R)-lactate from methylglyoxal: step 2/2. Thiolesterase that catalyzes the hydrolysis of S-D-lactoyl-glutathione to form glutathione and D-lactic acid. In Aeromonas salmonicida (strain A449), this protein is Hydroxyacylglutathione hydrolase.